A 427-amino-acid polypeptide reads, in one-letter code: 3-phosphoshikimate 1-carboxyvinyltransferase (427 aa).

3-phosphoshikimate-binding residues include K22, S23, and R27. A phosphoenolpyruvate-binding site is contributed by K22. Phosphoenolpyruvate-binding residues include G96 and R124. Residues S169, S170, Q171, S197, D313, N336, and K340 each contribute to the 3-phosphoshikimate site. Position 171 (Q171) interacts with phosphoenolpyruvate. D313 serves as the catalytic Proton acceptor. Positions 344, 386, and 411 each coordinate phosphoenolpyruvate.

Belongs to the EPSP synthase family. As to quaternary structure, monomer.

Its subcellular location is the cytoplasm. It catalyses the reaction 3-phosphoshikimate + phosphoenolpyruvate = 5-O-(1-carboxyvinyl)-3-phosphoshikimate + phosphate. It participates in metabolic intermediate biosynthesis; chorismate biosynthesis; chorismate from D-erythrose 4-phosphate and phosphoenolpyruvate: step 6/7. In terms of biological role, catalyzes the transfer of the enolpyruvyl moiety of phosphoenolpyruvate (PEP) to the 5-hydroxyl of shikimate-3-phosphate (S3P) to produce enolpyruvyl shikimate-3-phosphate and inorganic phosphate. The protein is 3-phosphoshikimate 1-carboxyvinyltransferase of Salmonella paratyphi A (strain ATCC 9150 / SARB42).